Here is a 515-residue protein sequence, read N- to C-terminus: Cytochrome P450 76C3 (515 aa).

The helical transmembrane segment at 5–25 (LIQGMSLPLYFLLTLFFFFFA) threads the bilayer. Position 451 (Cys-451) interacts with heme.

The protein belongs to the cytochrome P450 family. Heme serves as cofactor.

It is found in the membrane. This is Cytochrome P450 76C3 (CYP76C3) from Arabidopsis thaliana (Mouse-ear cress).